The chain runs to 367 residues: Anhydro-N-acetylmuramic acid kinase (367 aa).

An ATP-binding site is contributed by Gly-11–Asp-18.

Belongs to the anhydro-N-acetylmuramic acid kinase family.

The enzyme catalyses 1,6-anhydro-N-acetyl-beta-muramate + ATP + H2O = N-acetyl-D-muramate 6-phosphate + ADP + H(+). The protein operates within amino-sugar metabolism; 1,6-anhydro-N-acetylmuramate degradation. It participates in cell wall biogenesis; peptidoglycan recycling. Functionally, catalyzes the specific phosphorylation of 1,6-anhydro-N-acetylmuramic acid (anhMurNAc) with the simultaneous cleavage of the 1,6-anhydro ring, generating MurNAc-6-P. Is required for the utilization of anhMurNAc either imported from the medium or derived from its own cell wall murein, and thus plays a role in cell wall recycling. This Rhodopseudomonas palustris (strain HaA2) protein is Anhydro-N-acetylmuramic acid kinase.